The sequence spans 722 residues: Zinc finger BED domain-containing protein RICESLEEPER 1 (722 aa).

A BED-type zinc finger spans residues 66–126 (RKKSLVWEHF…GSCPKIKNQE (61 aa)). Positions 89, 92, 113, and 119 each coordinate Zn(2+). Residues 572 to 592 (VEQGGGNNAPASENSTQATAP) are disordered. Residues 580–592 (APASENSTQATAP) show a composition bias toward polar residues. An HATC (Hobo-Ac-Tam3) domain region spans residues 617 to 702 (ELEQYLDESL…EALVCAKDWL (86 aa)).

Homodimer.

It localises to the nucleus. Functionally, transposase-like protein that is essential for plant growth and development. May regulate global gene expression by recruiting other cellular factors. This is Zinc finger BED domain-containing protein RICESLEEPER 1 from Oryza sativa subsp. japonica (Rice).